A 304-amino-acid polypeptide reads, in one-letter code: Probable cobalamin biosynthesis protein CobD (304 aa).

5 consecutive transmembrane segments (helical) span residues 2–22 (IVVLIGALSIDIIFGEPKEYI), 50–70 (ILFSIAVIVLTAIPYFLAVYL), 73–93 (FILVVYVVVSMVILKTTFSIT), 147–167 (VDGYITPLFFFVFFGLPGAFI), and 284–304 (AAYSYIVIFVLPLLVIMAVFL).

This sequence belongs to the CobD/CbiB family.

It is found in the cell membrane. Its pathway is cofactor biosynthesis; adenosylcobalamin biosynthesis. In terms of biological role, converts cobyric acid to cobinamide by the addition of aminopropanol on the F carboxylic group. The chain is Probable cobalamin biosynthesis protein CobD from Thermoplasma volcanium (strain ATCC 51530 / DSM 4299 / JCM 9571 / NBRC 15438 / GSS1).